The chain runs to 318 residues: Ubiquinol oxidase (318 aa).

A helical membrane pass occupies residues 150 to 170; sequence VVVLETVAAIPGMVGGMFRHL. Fe cation contacts are provided by glutamate 154, glutamate 193, and histidine 196. A helical membrane pass occupies residues 212-232; sequence MLIKLGQFLFFNGYMVFYFVA. Glutamate 244, glutamate 295, and histidine 298 together coordinate Fe cation.

This sequence belongs to the alternative oxidase family. As to quaternary structure, found as monomers and homodimers. The cofactor is Fe cation.

It is found in the mitosome membrane. The enzyme catalyses 2 a ubiquinol + O2 = 2 a ubiquinone + 2 H2O. Functionally, alternative oxidase which function may be to reoxidize reducing equivalents produced by glycolysis such as ubiquinol. The chain is Ubiquinol oxidase (AOX) from Trachipleistophora hominis (Microsporidian parasite).